Here is a 586-residue protein sequence, read N- to C-terminus: DNA-directed RNA polymerase subunit beta' (586 aa).

Zn(2+) is bound by residues Cys-64, Cys-66, Cys-85, and Cys-88. Residues Asp-448, Asp-450, and Asp-452 each contribute to the Mg(2+) site.

It belongs to the RNA polymerase beta' chain family. RpoC1 subfamily. In plastids the minimal PEP RNA polymerase catalytic core is composed of four subunits: alpha, beta, beta', and beta''. When a (nuclear-encoded) sigma factor is associated with the core the holoenzyme is formed, which can initiate transcription. It depends on Mg(2+) as a cofactor. Zn(2+) is required as a cofactor.

The protein resides in the plastid. It is found in the chloroplast. The enzyme catalyses RNA(n) + a ribonucleoside 5'-triphosphate = RNA(n+1) + diphosphate. Its function is as follows. DNA-dependent RNA polymerase catalyzes the transcription of DNA into RNA using the four ribonucleoside triphosphates as substrates. The protein is DNA-directed RNA polymerase subunit beta' of Euglena gracilis.